A 165-amino-acid polypeptide reads, in one-letter code: uncharacterized protein (165 aa).

2 consecutive transmembrane segments (helical) span residues 7-27 (LWLA…QITV) and 141-161 (KGTP…IALL).

Its subcellular location is the cell membrane. This is an uncharacterized protein from Archaeoglobus fulgidus (strain ATCC 49558 / DSM 4304 / JCM 9628 / NBRC 100126 / VC-16).